Here is a 109-residue protein sequence, read N- to C-terminus: Fluorescence recovery protein (109 aa).

Probably a dimer, interacts with the C-terminal domain of OCP-R.

It is found in the cellular thylakoid membrane. In terms of biological role, destabilizes orange carotenoid protein-R form (OCP-R), the FRP-OCP interaction accelerates the OCP-R to OCP-O conversion. Increases fluorescence recovery following non-photochemical quenching (NPQ) by OCP, most probably by destabilizing OCP-R binding to the phycobilisome core. This is Fluorescence recovery protein (frp) from Synechocystis sp. (strain ATCC 27184 / PCC 6803 / Kazusa).